A 209-amino-acid polypeptide reads, in one-letter code: N-(5'-phosphoribosyl)anthranilate isomerase (209 aa).

This sequence belongs to the TrpF family.

It catalyses the reaction N-(5-phospho-beta-D-ribosyl)anthranilate = 1-(2-carboxyphenylamino)-1-deoxy-D-ribulose 5-phosphate. It functions in the pathway amino-acid biosynthesis; L-tryptophan biosynthesis; L-tryptophan from chorismate: step 3/5. The sequence is that of N-(5'-phosphoribosyl)anthranilate isomerase from Granulibacter bethesdensis (strain ATCC BAA-1260 / CGDNIH1).